A 99-amino-acid polypeptide reads, in one-letter code: U1-theraphotoxin-Lsp1b (99 aa).

The N-terminal stretch at 1–23 is a signal peptide; sequence MRSLTLAALLLCSLLLVFHTSAA. Positions 24–50 are excised as a propeptide; that stretch reads EELQAQEGHLMIPGDTDTALETVDDER. 4 cysteine pairs are disulfide-bonded: C54-C67, C58-C91, C72-C74, and C85-C96.

Belongs to the neurotoxin 12 (Hwtx-2) family. 04 (lasiotoxin) subfamily. Expressed by the venom gland.

The protein resides in the secreted. Functionally, toxin that causes irreversible contractile paralysis into adult Aedes aegypti resulting in 100% mortality after 24 hours. The sequence is that of U1-theraphotoxin-Lsp1b from Lasiodora sp. (strain IBSP 8539) (Brazilian salmon pink birdeater).